The primary structure comprises 565 residues: Urocanate hydratase (565 aa).

NAD(+) contacts are provided by residues 61-62, Gln139, 185-187, Glu205, Arg210, 251-252, 272-276, 282-283, and Tyr331; these read GG, GMG, NA, QTSAH, and YL. Cys419 is an active-site residue. The interval 453 to 472 is disordered; that stretch reads LDSGSVASPNRETESMRDGS. Residues 463 to 472 show a composition bias toward basic and acidic residues; the sequence is RETESMRDGS. Gly501 contributes to the NAD(+) binding site.

It belongs to the urocanase family. NAD(+) serves as cofactor.

It localises to the cytoplasm. It catalyses the reaction 4-imidazolone-5-propanoate = trans-urocanate + H2O. It participates in amino-acid degradation; L-histidine degradation into L-glutamate; N-formimidoyl-L-glutamate from L-histidine: step 2/3. Catalyzes the conversion of urocanate to 4-imidazolone-5-propionate. The polypeptide is Urocanate hydratase (Pseudomonas syringae pv. tomato (strain ATCC BAA-871 / DC3000)).